The primary structure comprises 130 residues: Small ribosomal subunit protein uS8 (130 aa).

Belongs to the universal ribosomal protein uS8 family. Part of the 30S ribosomal subunit.

In terms of biological role, one of the primary rRNA binding proteins, it binds directly to 16S rRNA central domain where it helps coordinate assembly of the platform of the 30S subunit. The sequence is that of Small ribosomal subunit protein uS8 from Pyrococcus abyssi (strain GE5 / Orsay).